A 105-amino-acid polypeptide reads, in one-letter code: Large ribosomal subunit protein uL24 (105 aa).

It belongs to the universal ribosomal protein uL24 family. In terms of assembly, part of the 50S ribosomal subunit.

One of two assembly initiator proteins, it binds directly to the 5'-end of the 23S rRNA, where it nucleates assembly of the 50S subunit. In terms of biological role, one of the proteins that surrounds the polypeptide exit tunnel on the outside of the subunit. This is Large ribosomal subunit protein uL24 from Vibrio atlanticus (strain LGP32) (Vibrio splendidus (strain Mel32)).